The chain runs to 447 residues: Probable ribosomal RNA small subunit methyltransferase B (447 aa).

S-adenosyl-L-methionine-binding positions include 259 to 265, D283, D310, and D329; that span reads CAAPGGK. C382 acts as the Nucleophile in catalysis.

Belongs to the class I-like SAM-binding methyltransferase superfamily. RsmB/NOP family.

The protein localises to the cytoplasm. It carries out the reaction cytidine(967) in 16S rRNA + S-adenosyl-L-methionine = 5-methylcytidine(967) in 16S rRNA + S-adenosyl-L-homocysteine + H(+). Functionally, specifically methylates the cytosine at position 967 (m5C967) of 16S rRNA. This Bacillus subtilis (strain 168) protein is Probable ribosomal RNA small subunit methyltransferase B.